Consider the following 351-residue polypeptide: Centromere-binding protein 1 (351 aa).

Met1 carries the post-translational modification N-acetylmethionine. 3 stretches are compositionally biased toward polar residues: residues 1–10 (MNSLANNNKL), 43–52 (LLSQESNDGN), and 65–77 (KGTQSQYESGLTS). Disordered regions lie at residues 1–164 (MNSL…TQQS), 196–233 (KKDISMQPGRRGRKPTTLATTDEWKKQRKDSHKEVERR), and 327–351 (YEDMHTHKKQENERKSTRSDNPHEA). Ser45 is subject to Phosphoserine; by ATM or ATR. The residue at position 48 (Ser48) is a Phosphoserine. Residue Ser84 is modified to Phosphoserine. Composition is skewed to polar residues over residues 100–124 (VNYTDLIQGQEDSSDAHTSNQTNAN) and 138–164 (TPSNEGVKPNTSLEGMTSSPMESTQQS). Thr138 carries the post-translational modification Phosphothreonine. In terms of domain architecture, bHLH spans 222–270 (QRKDSHKEVERRRRENINTAINVLSDLLPVRESSKAAILACAAEYIQKL).

Binds DNA as a dimer. Associates with MET4 to form a heteromeric complex which also includes MET28.

The protein localises to the nucleus. It is found in the mitochondrion. The protein resides in the chromosome. It localises to the centromere. Functionally, required for chromosome stability and methionine prototrophy. It is involved in chromosomal segregation. Binds to a highly conserved DNA sequence (5'-RTCACRTG-3'), called CDEI, found in centromeres and in several promoters. DNA-binding activity is enhanced by MET28. Required as an auxiliary factor for transcriptional activation of sulfur metabolism together with MET4 and MET28. The sequence is that of Centromere-binding protein 1 (CBF1) from Saccharomyces cerevisiae (strain ATCC 204508 / S288c) (Baker's yeast).